A 1980-amino-acid chain; its full sequence is MSAHEAGSSGRRRPATFHLHIYPQLPSAGSQTSCRVTATKDSTTSDVIRDVVASLHLDGSKHYVLVEVKESGGEEWVLDASDSPVHRVLLWPRRAQKEHPREDGYYFLLQERNADGSIQYLHVQLLAQPTAACRLVERGLLPRPQADFDDLCNLPELNEANLLQSLKLRFVQQKIYTYAGSILVAINPFKFLPIYNPKYVKMYENQQLGKLEPHVFALADVAYYTMLRKHVNQCIVISGESGSGKTQSTNFLIHCLTALSQKGYASGVERTILGAGPVLEAFGNAKTAHNNNSSRFGKFIQVNYLESGIVRGAVVEKYLLEKSRLVSQEKDERNYHVFYYLLLGVSEEERQEFQLKQPQDYFYLNQHNLNIEDGEDLKHDFERLQQAMEMVGFLPATKKQIFSVLSAILYLGNVTYKKRATGRDEGLEVGPPEVLDTLSQLLKVKRETLVEVLTKRKTITVNDKLILPYSLSEAITARDSMAKSLYSALFDWIVLRINHALLNKKDMEEAVSCLSIGVLDIFGFEDFERNSFEQFCINYANEQLQYYFTQHIFKLEQEEYQGEGISWHNIDYTDNVGCIHLISKKPTGLFYLLDEESNFPHATSHTLLAKFKQQHEDNKYFLGTPVLEPAFIIQHFAGRVKYQIKDFREKNMDYMRPDIVALLRGSDSSYVRQLIGMDPVAVFRWAVLRAAIRAMAVLREAGRLRAERAEKAEAGVSSPVTRSHVEELPRGANTPSEKLYRDLHNQIIKSLKGLPWQGEDPRRLLQSLSRLQKPRTFFLKSKGIKQKQIIPKNLLDSKSLRLIISMTLHDRTTKSLLHLHKKKKPPSISAQFQTSLNKLLEALGKAEPFFIRCIRSNAEKKELCFDDELVLQQLRYTGMLETVRIRRSGYSAKYTFQDFTEQFQVLLPKDVQPCREAIAALLEKLQVDRQNYQIGKTKVFLKETERQALQERLHGEVLRRILLLQSWFRMVLERRHFVQMKHAALTIQACWRSYRVRRTLERTRAAVYLQAAWRGYLQRQAYHHQRHSIIRLQSLCRGHLQRRSFSQMMLEKQKAEQARETAGAEMSEGEPSPVAAGEQPSEHPVEDPESLGVETETWMNSKSPNGLSPKKEIPSPEMETPAQKTVPAESHEKVPSSREKRESRRQRGLEHVERQNKHIQSCREENSTLREPSRKASLETGESFPEDTKEPREDGLETWTETAAPSCPKQVPIVGDPPRSPSPLQRPASLDLDSRVSPVLPSSSLESPQDEDKGENSTKVQDKPESPSGSTQIQRYQHPDTERLATAVEIWRGKKLASAMLSQSLDLSEKPRTAGAALTPTEERRISFSTSDVSKLSPVKTSTEVDGDLSAKKPAGHKKKSEDPSAGPDAGLPTGSQGDSKSAFKRLFLHKAKDKKPSLEGVEETEGSGGQAAQEAPARKTLDVPSSQQHRHTTGEKPLKGKKNRNRKVGQITVSEKWRESVFRKITNANELKFLDEFLLNKVNDLRSQKTPIESLFIEATERFRSNIKTMYSVPNGKIHVGYKDLMENYQIVVSNLAAERGEKDTNLVLNVFQSLLDEFTRSYNKTDFEPVKGKAQKKKRKQERAVQEHNGHVFASYQVNIPQSCEQCLSYIWLMDKALLCSVCKMTCHKKCVHKIQSYCSYTGRRKSELGAEPGHFGVCVDSLTSDKASVPIVLEKLLEHVEMHGLYTEGLYRKSGAANRTRELRQALQTDPATVKLEDFPIHAITGVLKQWLRELPEPLMTFAQYGDFLRAVELPEKQEQLAAIYAVLDHLPEANHTSLERLIFHLVKVALLEDVNRMSPGALAIIFAPCLLRCPDNSDPLTSMKDVLKITTCVEMLIKEQMRKYKVKMEEINHLEAAESIAFRRLSLLRQNAPWPLKLGFSSPYEGVRTKSPRTPVVQDLEELGALPEEAAGGDEDREKEILMERIQSIKEEKEDITYRLPELDPRGSDEENLDSETSASTESLLEERAVRGAAEE.

S2 carries the post-translational modification N-acetylserine. Positions 15 to 114 constitute a Ras-associating domain; sequence ATFHLHIYPQ…YYFLLQERNA (100 aa). The 809-residue stretch at 146 to 954 folds into the Myosin motor domain; sequence ADFDDLCNLP…ERQALQERLH (809 aa). An ATP-binding site is contributed by 239-246; that stretch reads GESGSGKT. Residues 715-736 form a disordered region; the sequence is GVSSPVTRSHVEELPRGANTPS. Residues S717 and S718 each carry the phosphoserine modification. An actin-binding region spans residues 845 to 856; it reads KAEPFFIRCIRS. Positions 941–1045 are neck or regulatory domain; it reads LKETERQALQ…CRGHLQRRSF (105 aa). IQ domains lie at 958–978, 981–1001, 1002–1024, and 1025–1054; these read LRRI…RHFV, KHAA…RTLE, RTRA…AYHH, and QRHS…EKQK. Phosphoserine is present on S1046. A tail region spans residues 1046-1980; sequence SQMMLEKQKA…ERAVRGAAEE (935 aa). 3 disordered regions span residues 1049 to 1281, 1302 to 1380, and 1394 to 1449; these read MLEK…HPDT, SQSL…QGDS, and DKKP…NRKV. Residues 1097–1106 show a composition bias toward polar residues; sequence TWMNSKSPNG. Residues S1108, S1115, and S1177 each carry the phosphoserine modification. Basic and acidic residues-rich tracts occupy residues 1129 to 1177 and 1186 to 1195; these read ESHE…RKAS and EDTKEPREDG. A phosphoserine mark is found at S1220, S1222, S1229, S1237, S1243, and S1247. Residues 1235-1247 show a composition bias toward low complexity; the sequence is RVSPVLPSSSLES. Positions 1250-1265 are enriched in basic and acidic residues; sequence DEDKGENSTKVQDKPE. Phosphoserine is present on residues S1266, S1268, and S1304. T1319 is modified (phosphothreonine). S1327, S1329, and S1337 each carry phosphoserine. Residues 1327-1344 show a composition bias toward polar residues; that stretch reads SFSTSDVSKLSPVKTSTE. The Phorbol-ester/DAG-type zinc finger occupies 1592-1641; sequence GHVFASYQVNIPQSCEQCLSYIWLMDKALLCSVCKMTCHKKCVHKIQSYC. Position 1649 is a phosphoserine (S1649). Residues 1663–1848 form the Rho-GAP domain; it reads DSLTSDKASV…MLIKEQMRKY (186 aa). An interaction with RHOA region spans residues 1699–1704; that stretch reads AANRTR. A coiled-coil region spans residues 1841-1861; it reads IKEQMRKYKVKMEEINHLEAA. Residue S1886 is modified to Phosphoserine. The disordered stretch occupies residues 1891–1923; the sequence is VRTKSPRTPVVQDLEELGALPEEAAGGDEDREK. The stretch at 1918 to 1948 forms a coiled coil; sequence DEDREKEILMERIQSIKEEKEDITYRLPELD. 3 positions are modified to phosphoserine: S1932, S1952, and S1959. Basic and acidic residues predominate over residues 1937 to 1953; that stretch reads KEDITYRLPELDPRGSD. Positions 1937-1980 are disordered; that stretch reads KEDITYRLPELDPRGSDEENLDSETSASTESLLEERAVRGAAEE. T1965 is subject to Phosphothreonine. The span at 1969–1980 shows a compositional bias: basic and acidic residues; sequence LEERAVRGAAEE.

It belongs to the TRAFAC class myosin-kinesin ATPase superfamily. Myosin family. Interacts (via IQ domains) with CALM. Interacts with RHOA. Interacts (via Rho-GAP domain) with ROBO1; this inhibits the interaction with RHOA and the stimulation of RHOA GTPase activity, and thereby increases the levels of active RHOA. Expressed in testis, lung, thymus, brain, liver, spleen and heart muscle. Detected in lung, testis, spleen and liver, and at reduced level in different brain regions (at protein level).

It localises to the cytoplasm. The protein resides in the cell cortex. It is found in the perinuclear region. The protein localises to the cytoskeleton. Its function is as follows. Myosins are actin-based motor molecules with ATPase activity. Unconventional myosins serve in intracellular movements. Binds actin with high affinity both in the absence and presence of ATP and its mechanochemical activity is inhibited by calcium ions. Also acts as a GTPase activator for RHOA. Plays a role in the regulation of cell migration via its role as RHOA GTPase activator. This is regulated by its interaction with the SLIT2 receptor ROBO1; interaction with ROBO1 impairs interaction with RHOA and subsequent activation of RHOA GTPase activity, and thereby leads to increased levels of active, GTP-bound RHOA. This Rattus norvegicus (Rat) protein is Unconventional myosin-IXb (Myo9b).